The chain runs to 164 residues: Ubiquitin-fold modifier-conjugating enzyme 1 (164 aa).

The Glycyl thioester intermediate role is filled by Cys-116.

This sequence belongs to the ubiquitin-conjugating enzyme family. UFC1 subfamily.

Functionally, E2-like enzyme which forms an intermediate with UFM1 via a thioester linkage. The chain is Ubiquitin-fold modifier-conjugating enzyme 1 from Drosophila sechellia (Fruit fly).